The sequence spans 479 residues: Dihydrolipoyl dehydrogenase (479 aa).

FAD-binding positions include 41–50 (EKRGALGGTC), Lys-59, Ala-124, and 153–155 (TGS). Cys-50 and Cys-55 form a disulfide bridge. NAD(+)-binding positions include 190-197 (GGGVIGLE), Glu-213, Ile-247, and Gly-284. FAD-binding positions include Asp-325 and 332 to 335 (MLAH). The active-site Proton acceptor is His-458.

The protein belongs to the class-I pyridine nucleotide-disulfide oxidoreductase family. As to quaternary structure, homodimer. FAD is required as a cofactor.

The catalysed reaction is N(6)-[(R)-dihydrolipoyl]-L-lysyl-[protein] + NAD(+) = N(6)-[(R)-lipoyl]-L-lysyl-[protein] + NADH + H(+). The protein is Dihydrolipoyl dehydrogenase of Trypanosoma brucei brucei.